Reading from the N-terminus, the 460-residue chain is Proline--tRNA ligase (460 aa).

This sequence belongs to the class-II aminoacyl-tRNA synthetase family. ProS type 3 subfamily. As to quaternary structure, homodimer.

It is found in the cytoplasm. It catalyses the reaction tRNA(Pro) + L-proline + ATP = L-prolyl-tRNA(Pro) + AMP + diphosphate. In terms of biological role, catalyzes the attachment of proline to tRNA(Pro) in a two-step reaction: proline is first activated by ATP to form Pro-AMP and then transferred to the acceptor end of tRNA(Pro). The sequence is that of Proline--tRNA ligase from Methanococcus maripaludis (strain C6 / ATCC BAA-1332).